The sequence spans 365 residues: Tubulin-like protein CetZ (365 aa).

Residues Gln10–Lys14, Gly103–Gly105, Glu136, Asn163, and Asn181 each bind GTP.

It belongs to the CetZ family.

It localises to the cytoplasm. Functionally, involved in cell shape control. The chain is Tubulin-like protein CetZ from Pyrococcus horikoshii (strain ATCC 700860 / DSM 12428 / JCM 9974 / NBRC 100139 / OT-3).